The sequence spans 448 residues: Enolase (448 aa).

Gln164 serves as a coordination point for (2R)-2-phosphoglycerate. Residue Glu206 is the Proton donor of the active site. Residues Asp243, Glu289, and Asp316 each contribute to the Mg(2+) site. 4 residues coordinate (2R)-2-phosphoglycerate: Lys341, Arg370, Ser371, and Lys392. Lys341 serves as the catalytic Proton acceptor.

It belongs to the enolase family. Mg(2+) serves as cofactor.

The protein localises to the cytoplasm. It localises to the secreted. It is found in the cell surface. It catalyses the reaction (2R)-2-phosphoglycerate = phosphoenolpyruvate + H2O. The protein operates within carbohydrate degradation; glycolysis; pyruvate from D-glyceraldehyde 3-phosphate: step 4/5. Its function is as follows. Catalyzes the reversible conversion of 2-phosphoglycerate (2-PG) into phosphoenolpyruvate (PEP). It is essential for the degradation of carbohydrates via glycolysis. The polypeptide is Enolase (Oenococcus oeni (strain ATCC BAA-331 / PSU-1)).